The primary structure comprises 550 residues: MFCVQCEQTIRTPAGNGCSYAQGMCGKTAETSDLQDLLVAVLQGLSAWALQARELGIIDSQIDSFAPRAFFSTLTNVNFDSDRIVEYAKDAILLRHSLAVRCRLLDSTITVDHPLAELQLVADDIPSLLQQSQQFALNNDKADVGDDIHGLRMLCLYGLKGAAAYMEHAHVLGQSDEQIYAEYHAYMAWLGTQPRDVDTLLNNAMGIGKMNFNVMAILDQGETQAYGDPQPTSVNVRPVAGKAILISGHDLKDLHMLLEQTQGTGINIYTHGEMLPAHGYPELKRYPHLVGNYGSGWQNQQTEFAKFPGPILMTSNCIIDPNVGNYGDRIWTRSIVGWPGVNHLDGDNFAPVIEQALGMAGFPYSELEHLITVGFGRQTLLNAADTVIDLVASKKLRHVFLVGGCDGSRTERSYFTDFARSVPQDCIIMTLACGKYRFNKLDFGTLEGLPRLLDVGQCNDAYAAIMLAVKLSEKLGCTVNDLPLSLVLSWFEQKAIVILLTLLSLGVKNIYTGPTAPGFLTDNLMAILYEKFGMQPITTVEQDMQAILGH.

Residues Cys-3, Cys-6, Cys-18, and Cys-25 each contribute to the [2Fe-2S] cluster site. His-249, Glu-273, Cys-317, Cys-405, Cys-433, Cys-458, Glu-492, and Lys-494 together coordinate hybrid [4Fe-2O-2S] cluster. Cys-405 carries the post-translational modification Cysteine persulfide.

The protein belongs to the HCP family. The cofactor is [2Fe-2S] cluster. It depends on hybrid [4Fe-2O-2S] cluster as a cofactor.

It localises to the cytoplasm. The catalysed reaction is A + NH4(+) + H2O = hydroxylamine + AH2 + H(+). Its function is as follows. Catalyzes the reduction of hydroxylamine to form NH(3) and H(2)O. The sequence is that of Hydroxylamine reductase from Yersinia pseudotuberculosis serotype O:1b (strain IP 31758).